Reading from the N-terminus, the 453-residue chain is Mitochondrial import inner membrane translocase subunit TIM44 (453 aa).

The residue at position 129 (Thr-129) is a Phosphothreonine. ATP is bound at residue Gly-167–Thr-174. Lys-178 is subject to N6-succinyllysine. Ser-181 carries the post-translational modification Phosphoserine. An N6-succinyllysine modification is found at Lys-218.

It belongs to the Tim44 family. As to quaternary structure, probable component of the PAM complex at least composed of a mitochondrial HSP70 protein, GRPEL1 or GRPEL2, TIMM44, TIMM16/PAM16 and TIMM14/DNAJC19. The complex interacts with the TIMM23 component of the TIM23 complex. Interacts with SLC25A4/ANT1 and SLC25A5/ANT2; leading to inhibit the presequence translocase TIMM23, thereby promoting stabilization of PINK1.

The protein resides in the mitochondrion inner membrane. It localises to the mitochondrion matrix. In terms of biological role, essential component of the PAM complex, a complex required for the translocation of transit peptide-containing proteins from the inner membrane into the mitochondrial matrix in an ATP-dependent manner. Recruits mitochondrial HSP70 to drive protein translocation into the matrix using ATP as an energy source. This chain is Mitochondrial import inner membrane translocase subunit TIM44 (Timm44), found in Rattus norvegicus (Rat).